Reading from the N-terminus, the 356-residue chain is Protein RecA (356 aa).

Gly77–Thr84 is an ATP binding site.

Belongs to the RecA family.

It is found in the cytoplasm. Its function is as follows. Can catalyze the hydrolysis of ATP in the presence of single-stranded DNA, the ATP-dependent uptake of single-stranded DNA by duplex DNA, and the ATP-dependent hybridization of homologous single-stranded DNAs. It interacts with LexA causing its activation and leading to its autocatalytic cleavage. The sequence is that of Protein RecA from Caulobacter vibrioides (strain ATCC 19089 / CIP 103742 / CB 15) (Caulobacter crescentus).